Consider the following 154-residue polypeptide: MLINKTKGKVWTGRVKIADTFFKRFRGLMLTPNVNYALVFILPSETRLNASIHMFFMLQSIDVIFLDSSREVVDLKRARPWRFYVPKGGAKYIIETPVGVIDYLNAEIGDEIDWEVEEERSAIPSPVEALNKIGIKNSNGTISLAEPKPKLKGE.

Belongs to the UPF0127 family.

The sequence is that of UPF0127 protein TSIB_1463 from Thermococcus sibiricus (strain DSM 12597 / MM 739).